A 379-amino-acid chain; its full sequence is Stimulator of interferon genes protein (379 aa).

3 helical membrane passes run 20-40 (VAAF…GEPS), 87-107 (ACLG…YFYV), and 115-135 (LPLT…ILLG). S-palmitoyl cysteine attachment occurs at residues C88 and C91. A cyclic dinucleotide-binding domain (CBD) region spans residues 153–340 (FNVAHGLAWS…KHLRQEEREE (188 aa)). Residues S162, Y167, R238, and T263 each coordinate 2',3'-cGAMP. 3',3'-c-di-GMP-binding positions include S162, Y167, 238–241 (RVYT), and T263. 2',3'-cUAMP-binding residues include Y167, R238, and T263. The tract at residues 340–379 (EVTMGTAGTFVAPGSSTLHQEPELLISGMDQPLPLRTDIF) is C-terminal tail (CTT). Position 355 is a phosphoserine (S355). T356 bears the Phosphothreonine mark. A pLxIS motif motif is present at residues 363–366 (LLIS). S366 is modified (phosphoserine; by TBK1).

This sequence belongs to the STING family. As to quaternary structure, homodimer; forms a homodimer in absence of cyclic nucleotide (c-di-GMP or cGAMP). Homotetramer; in presence of cyclic nucleotide (c-di-GMP or cGAMP), forms tetramers and higher-order oligomers through side-by-side packing. Interacts (when phosphorylated) with IRF3; following activation and phosphorylation on the pLxIS motif by TBK1, recruits IRF3. Interacts with TBK1; when homodimer, leading to subsequent production of IFN-beta. Interacts (via transmembrane domain) with TMEM203. In terms of processing, phosphorylation by TBK1 leads to activation and production of IFN-beta. Following cyclic nucleotide (c-di-GMP or cGAMP)-binding, activation and translocation from the endoplasmic reticulum, STING1 is phosphorylated by TBK1 at Ser-366 in the pLxIS motif. The phosphorylated pLxIS motif constitutes an IRF3-binding motif, leading to recruitment of the transcription factor IRF3 to induce type-I interferons and other cytokines. In contrast, lacks phosphorylation site at position 358, leading to reduced production of type-I interferons and other cytokines.

Its subcellular location is the endoplasmic reticulum membrane. It localises to the cytoplasm. It is found in the perinuclear region. The protein resides in the endoplasmic reticulum-Golgi intermediate compartment membrane. The protein localises to the golgi apparatus membrane. Its subcellular location is the cytoplasmic vesicle. It localises to the autophagosome membrane. It is found in the mitochondrion outer membrane. The protein resides in the cell membrane. It carries out the reaction H(+)(in) = H(+)(out). In terms of biological role, facilitator of innate immune signaling that acts as a sensor of cytosolic DNA from bacteria and viruses and promotes low production of type I interferon (IFN-alpha and IFN-beta). Compared to other mammals, STING1-dependent type I interferon induction is strongly reduced in bats, suggesting that the cGAS-STING pathway promotes a limited inflammatory response. Innate immune response is triggered in response to non-CpG double-stranded DNA from viruses and bacteria delivered to the cytoplasm. Acts by binding cyclic dinucleotides: recognizes and binds cyclic di-GMP (c-di-GMP), a second messenger produced by bacteria, cyclic UMP-AMP (2',3'-cUAMP), and cyclic GMP-AMP (cGAMP), a messenger produced by CGAS in response to DNA virus in the cytosol. Upon binding to c-di-GMP, cUAMP or cGAMP, STING1 oligomerizes, translocates from the endoplasmic reticulum and is phosphorylated by TBK1 on the pLxIS motif, leading to recruitment and subsequent activation of the transcription factor IRF3 to induce expression of type I interferon and exert a potent anti-viral state. In addition to promote the production of type I interferons, plays a direct role in autophagy. Following cGAMP-binding, STING1 buds from the endoplasmic reticulum into COPII vesicles, which then form the endoplasmic reticulum-Golgi intermediate compartment (ERGIC). The ERGIC serves as the membrane source for WIPI2 recruitment and LC3 lipidation, leading to formation of autophagosomes that target cytosolic DNA or DNA viruses for degradation by the lysosome. Promotes autophagy by acting as a proton channel that directs proton efflux from the Golgi to facilitate MAP1LC3B/LC3B lipidation. The autophagy- and interferon-inducing activities can be uncoupled and autophagy induction is independent of TBK1 phosphorylation. The sequence is that of Stimulator of interferon genes protein from Eidolon helvum (Straw-colored fruit bat).